We begin with the raw amino-acid sequence, 218 residues long: MANSSPVYDWFQERLEIQDIADDISTKYVPPHVNIFYCLGGITLVCFLIQFATGFAMTFYYKPTVAEAYSSVQYLMTDVSFGWLIRSVHRWSASMMVLMLILHVFRVYLTGGFKRPRELTWVTGVTMAVITVSFGVTGYSLPWDQVGYWAVKIVSGVPAAIPVVGDFMVELLRGGESVGQSTLTRFYSLHTFVMPWLLAVFMLMHFLMIRKQGISGPL.

The helical transmembrane segment at 35–55 (IFYCLGGITLVCFLIQFATGF) threads the bilayer. Residue C38 coordinates heme c. Residues H89 and H103 each coordinate heme b. Transmembrane regions (helical) follow at residues 93-113 (ASMM…TGGF), 119-139 (LTWV…VTGY), and 189-209 (LHTF…FLMI). Heme b-binding residues include H190 and H205.

The protein belongs to the cytochrome b family. PetB subfamily. The 4 large subunits of the cytochrome b6-f complex are cytochrome b6, subunit IV (17 kDa polypeptide, PetD), cytochrome f and the Rieske protein, while the 4 small subunits are PetG, PetL, PetM and PetN. The complex functions as a dimer. The cofactor is heme b. Heme c serves as cofactor.

The protein resides in the cellular thylakoid membrane. Component of the cytochrome b6-f complex, which mediates electron transfer between photosystem II (PSII) and photosystem I (PSI), cyclic electron flow around PSI, and state transitions. This chain is Cytochrome b6, found in Parasynechococcus marenigrum (strain WH8102).